Reading from the N-terminus, the 138-residue chain is ATP synthase epsilon chain (138 aa).

Belongs to the ATPase epsilon chain family. In terms of assembly, F-type ATPases have 2 components, CF(1) - the catalytic core - and CF(0) - the membrane proton channel. CF(1) has five subunits: alpha(3), beta(3), gamma(1), delta(1), epsilon(1). CF(0) has three main subunits: a, b and c.

It is found in the cell inner membrane. Its function is as follows. Produces ATP from ADP in the presence of a proton gradient across the membrane. The sequence is that of ATP synthase epsilon chain from Bartonella henselae (strain ATCC 49882 / DSM 28221 / CCUG 30454 / Houston 1) (Rochalimaea henselae).